A 236-amino-acid polypeptide reads, in one-letter code: Peroxisomal coenzyme A diphosphatase NUDT7 (236 aa).

K20 is subject to N6-succinyllysine. Residues 37–169 (SNKFSVLVPL…QKQITQSGRD (133 aa)) form the Nudix hydrolase domain. Residues 77 to 98 (KRDPVDTDDTATALREAQEEVG) carry the Nudix box motif. Residues E92 and E96 each contribute to the Mg(2+) site. The residue at position 178 (K178) is an N6-succinyllysine. Positions 234–236 (SKL) match the Microbody targeting signal motif.

Belongs to the Nudix hydrolase family. PCD1 subfamily. In terms of assembly, monomer. It depends on Mn(2+) as a cofactor. The cofactor is Mg(2+). Highly expressed in liver, brown adipose tissue and heart. Expressed at intermediate level in lung and kidney and at low level in brain. In terms of tissue distribution, expressed in liver, brown adipose tissue and heart at 20 times lower levels than isoform 1.

The protein localises to the peroxisome. It catalyses the reaction hexanoyl-CoA + H2O = hexanoyl-4'-phosphopantetheine + adenosine 3',5'-bisphosphate + 2 H(+). The catalysed reaction is octanoyl-CoA + H2O = S-octanoyl-4'-phosphopantetheine + adenosine 3',5'-bisphosphate + 2 H(+). It carries out the reaction butanoyl-CoA + H2O = S-butanoyl-4'-phosphopantetheine + adenosine 3',5'-bisphosphate + 2 H(+). The enzyme catalyses decanoyl-CoA + H2O = decanoyl-4'-phosphopantetheine + adenosine 3',5'-bisphosphate + 2 H(+). It catalyses the reaction dodecanoyl-CoA + H2O = S-dodecanoyl-4'-phosphopantetheine + adenosine 3',5'-bisphosphate + 2 H(+). The catalysed reaction is tetradecanoyl-CoA + H2O = tetradecanoyl-4'-phosphopantetheine + adenosine 3',5'-bisphosphate + 2 H(+). It carries out the reaction choloyl-CoA + H2O = S-choloyl-4'-phosphopantetheine + adenosine 3',5'-bisphosphate + 2 H(+). The enzyme catalyses 3alpha,7alpha,12alpha-trihydroxy-5beta-cholestan-26-oyl-CoA + H2O = 3alpha,7alpha,12alpha-trihydroxy-5beta-cholestan-26-oyl-4'-phosphopantetheine + adenosine 3',5'-bisphosphate + 2 H(+). It catalyses the reaction acetyl-CoA + H2O = S-acetyl-4'-phosphopantetheine + adenosine 3',5'-bisphosphate + 2 H(+). The catalysed reaction is CoA + H2O = (R)-4'-phosphopantetheine + adenosine 3',5'-bisphosphate + 2 H(+). It carries out the reaction propanoyl-CoA + H2O = propanoyl-4'-phosphopantetheine + adenosine 3',5'-bisphosphate + 2 H(+). The enzyme catalyses malonyl-CoA + H2O = malonyl-4'-phosphopantetheine + adenosine 3',5'-bisphosphate + 2 H(+). It catalyses the reaction succinyl-CoA + H2O = succinyl-4'-phosphopantetheine + adenosine 3',5'-bisphosphate + 2 H(+). The catalysed reaction is a 5'-end CoA-ribonucleoside in mRNA + H2O = a 5'-end phospho-adenosine-phospho-ribonucleoside in mRNA + (R)-4'-phosphopantetheine + 2 H(+). With respect to regulation, inhibited by fluoride. In terms of biological role, fatty acyl-coenzyme A (CoA) diphosphatase that hydrolyzes fatty acyl-CoA to yield acyl-4'-phosphopantetheine and adenosine 3',5'-bisphosphate. Cleaves CoA, CoA esters and oxidized CoA with similar efficiencies. Preferentially hydrolyzes medium-chain acyl-CoAs and bile acid-CoAs. Has no activity toward NDP-sugars, CDP-alcohols, (deoxy)nucleoside 5'-triphosphates, nucleoside 5'-di or monophosphates, diadenosine polyphosphates, NAD, NADH, NADP, NADPH or thymidine-5'-monophospho-p-nitrophenyl ester. May be required to eliminate oxidized CoA from peroxisomes, or regulate CoA and acyl-CoA levels in this organelle in response to metabolic demand. Does not play a role in U8 snoRNA decapping activity. Binds U8 snoRNA. Exhibits decapping activity towards dpCoA-capped RNAs in vitro. The chain is Peroxisomal coenzyme A diphosphatase NUDT7 from Mus musculus (Mouse).